Reading from the N-terminus, the 233-residue chain is Putative 26S proteasome non-ATPase regulatory subunit 8 homolog B (233 aa).

An N-acetylmethionine modification is found at Met1. Positions 38–217 constitute a PCI domain; the sequence is DHYLISLSLN…APCKEIPSLQ (180 aa).

Belongs to the proteasome subunit S14 family. Component of the 19S regulatory particle (RP/PA700) lid subcomplex of the 26S proteasome. The 26S proteasome is composed of a core protease (CP), known as the 20S proteasome, capped at one or both ends by the 19S regulatory particle (RP/PA700). The RP/PA700 complex is composed of at least 17 different subunits in two subcomplexes, the base and the lid, which form the portions proximal and distal to the 20S proteolytic core, respectively. Interacts with UCH1 and UCH2.

Acts as a regulatory subunit of the 26S proteasome which is involved in the ATP-dependent degradation of ubiquitinated proteins. The protein is Putative 26S proteasome non-ATPase regulatory subunit 8 homolog B of Arabidopsis thaliana (Mouse-ear cress).